The following is a 219-amino-acid chain: Trafficking protein particle complex subunit 4 (219 aa).

This sequence belongs to the TRAPP small subunits family. TRAPPC4 subfamily. In terms of assembly, component of the multisubunit TRAPP (transport protein particle) complex, which includes at least TRAPPC2, TRAPPC2L, TRAPPC3, TRAPPC3L, TRAPPC4, TRAPPC5, TRAPPC8, TRAPPC9, TRAPPC10, TRAPPC11 and TRAPPC12. Interacts with SDC2.

Its subcellular location is the postsynaptic cell membrane. The protein localises to the golgi apparatus membrane. It is found in the endoplasmic reticulum. The protein resides in the vesicle. In terms of biological role, core component of the TRAPP complexes which has a function of guanine nucleotide exchange factor activity for Rab1 GTPase. Plays a role in vesicular transport from endoplasmic reticulum to Golgi and autophagy. May play a role in dendrite postsynaptic membrane trafficking. The chain is Trafficking protein particle complex subunit 4 from Homo sapiens (Human).